The primary structure comprises 83 residues: Cytochrome b559 subunit alpha (83 aa).

Residues 21–35 (VIHSITIPSLFIAGW) traverse the membrane as a helical segment. Heme is bound at residue His-23.

The protein belongs to the PsbE/PsbF family. In terms of assembly, heterodimer of an alpha subunit and a beta subunit. PSII is composed of 1 copy each of membrane proteins PsbA, PsbB, PsbC, PsbD, PsbE, PsbF, PsbH, PsbI, PsbJ, PsbK, PsbL, PsbM, PsbT, PsbX, PsbY, PsbZ, Psb30/Ycf12, at least 3 peripheral proteins of the oxygen-evolving complex and a large number of cofactors. It forms dimeric complexes. Heme b serves as cofactor.

It is found in the plastid. Its subcellular location is the chloroplast thylakoid membrane. Functionally, this b-type cytochrome is tightly associated with the reaction center of photosystem II (PSII). PSII is a light-driven water:plastoquinone oxidoreductase that uses light energy to abstract electrons from H(2)O, generating O(2) and a proton gradient subsequently used for ATP formation. It consists of a core antenna complex that captures photons, and an electron transfer chain that converts photonic excitation into a charge separation. This chain is Cytochrome b559 subunit alpha, found in Chaetosphaeridium globosum (Charophycean green alga).